The following is a 314-amino-acid chain: MNDLTVVFAGTPEFGLPCLDALIQSRHHLKAVYTQPDRPAGRGRKLQESPVKEWAINHQIPVYQPLNFKNQEAVDELSALKPDVMVVIAYGLILPKAVLEIPRLGCINVHASLLPRWRGASPIQHAILHGDAESGVTIMQMDVGLDTGPMLCKATCPVTSSDTAGSLHDKLAKMSVKPLLDVLEALASNSAQFELQNNELATYAGKINKEEARINWHQSAVEIDRKIRAFNPWPVAYTLAGELMLRIHQAKATDIMSTEMPGMVLNVDKNGMLVATNDNALLVEKIQFPGAKVISVRDWLNSGKTQLHTGLMLQ.

Residue 112-115 participates in (6S)-5,6,7,8-tetrahydrofolate binding; that stretch reads SLLP.

This sequence belongs to the Fmt family.

The enzyme catalyses L-methionyl-tRNA(fMet) + (6R)-10-formyltetrahydrofolate = N-formyl-L-methionyl-tRNA(fMet) + (6S)-5,6,7,8-tetrahydrofolate + H(+). Its function is as follows. Attaches a formyl group to the free amino group of methionyl-tRNA(fMet). The formyl group appears to play a dual role in the initiator identity of N-formylmethionyl-tRNA by promoting its recognition by IF2 and preventing the misappropriation of this tRNA by the elongation apparatus. This is Methionyl-tRNA formyltransferase from Legionella pneumophila (strain Paris).